A 676-amino-acid polypeptide reads, in one-letter code: Electrogenic aspartate/glutamate antiporter SLC25A13, mitochondrial (676 aa).

Residue A2 is modified to N-acetylalanine. Positions 2 to 295 (AAAKVALTKR…TLADIERIAP (294 aa)) are regulatory N-terminal domain. Residues 2-332 (AAAKVALTKR…LLQLAESAYR (331 aa)) lie on the Mitochondrial intermembrane side of the membrane. 4 EF-hand domains span residues 51–86 (SQPN…SVLC), 87–122 (APDA…TTIH), 125–157 (IPFN…FLLE), and 158–193 (IQLE…IRPH). Residues D66, T68, D70, L72, and E77 each coordinate Ca(2+). Positions 296 to 312 (LEEGMLPFNLAEAQRQQ) are linker loop domain. The carrier domain stretch occupies residues 322-613 (FLLQLAESAY…LQRWFYVDFG (292 aa)). 3 Solcar repeats span residues 327–419 (AESA…VRDK), 427–511 (VPLL…VKAS), and 519–607 (VSPG…LQRW). A helical membrane pass occupies residues 333-350 (FGLGSIAGAVGATAVYPI). The Mitochondrial matrix portion of the chain corresponds to 351–393 (DLVKTRMQNQRSTGSFVGELMYKNSFDCFKKVLRYEGFFGLYR). N6-acetyllysine is present on residues K354 and K373. A helical transmembrane segment spans residues 394–413 (GLLPQLLGVAPEKAIKLTVN). The Mitochondrial intermembrane portion of the chain corresponds to 414 to 436 (DFVRDKFMHKDGSVPLLAEIFAG). Residues 437-450 (GCAGGSQVIFTNPL) traverse the membrane as a helical segment. At 451–485 (EIVKIRLQVAGEITTGPRVSALSVVRDLGFFGIYK) the chain is on the mitochondrial matrix side. K454 bears the N6-methyllysine mark. The residue at position 485 (K485) is an N6-acetyllysine; alternate. K485 is subject to N6-succinyllysine; alternate. A helical transmembrane segment spans residues 486-505 (GAKACFLRDIPFSAIYFPCY). Over 506-524 (AHVKASFANEDGQVSPGSL) the chain is Mitochondrial intermembrane. The helical transmembrane segment at 525-542 (LLAGAIAGMPAASLVTPA) threads the bilayer. Topologically, residues 543-581 (DVIKTRLQVAARAGQTTYSGVTDCFRKILREEGPKALWK) are mitochondrial matrix. K581 is modified (N6-succinyllysine). The helical transmembrane segment at 582 to 601 (GAGARVFRSSPQFGVTLLTY) threads the bilayer. Residues 602–676 (ELLQRWFYVD…STSKVTAVGS (75 aa)) lie on the Mitochondrial intermembrane side of the membrane. Positions 614 to 676 (GVKPVGSELV…STSKVTAVGS (63 aa)) are C-terminal domain. An N6-acetyllysine modification is found at K663. At S667 the chain carries Phosphoserine.

The protein belongs to the mitochondrial carrier (TC 2.A.29) family. Homodimer (via N-terminus).

It localises to the mitochondrion inner membrane. It carries out the reaction L-aspartate(in) + L-glutamate(out) + H(+)(out) = L-aspartate(out) + L-glutamate(in) + H(+)(in). The catalysed reaction is 3-sulfino-L-alanine(out) + L-glutamate(in) + H(+)(in) = 3-sulfino-L-alanine(in) + L-glutamate(out) + H(+)(out). The enzyme catalyses 3-sulfino-L-alanine(out) + L-aspartate(in) = 3-sulfino-L-alanine(in) + L-aspartate(out). Its activity is regulated as follows. L-aspartate and 3-sulfino-L-alanine uptake are both inhibited by glisoxepide. In terms of biological role, mitochondrial electrogenic aspartate/glutamate antiporter that favors efflux of aspartate and entry of glutamate and proton within the mitochondria as part of the malate-aspartate shuttle. Also mediates the uptake of L-cysteinesulfinate (3-sulfino-L-alanine) by mitochondria in exchange of L-glutamate and proton. Can also exchange L-cysteinesulfinate with aspartate in their anionic form without any proton translocation. Lacks transport activity towards gamma-aminobutyric acid (GABA). The polypeptide is Electrogenic aspartate/glutamate antiporter SLC25A13, mitochondrial (Rattus norvegicus (Rat)).